The sequence spans 167 residues: SsrA-binding protein (167 aa).

Residues 139-167 are disordered; it reads QAHDKRHAEKEREWQRDKQRIMRAHNRNA. The span at 144–158 shows a compositional bias: basic and acidic residues; the sequence is RHAEKEREWQRDKQR.

The protein belongs to the SmpB family.

The protein resides in the cytoplasm. Required for rescue of stalled ribosomes mediated by trans-translation. Binds to transfer-messenger RNA (tmRNA), required for stable association of tmRNA with ribosomes. tmRNA and SmpB together mimic tRNA shape, replacing the anticodon stem-loop with SmpB. tmRNA is encoded by the ssrA gene; the 2 termini fold to resemble tRNA(Ala) and it encodes a 'tag peptide', a short internal open reading frame. During trans-translation Ala-aminoacylated tmRNA acts like a tRNA, entering the A-site of stalled ribosomes, displacing the stalled mRNA. The ribosome then switches to translate the ORF on the tmRNA; the nascent peptide is terminated with the 'tag peptide' encoded by the tmRNA and targeted for degradation. The ribosome is freed to recommence translation, which seems to be the essential function of trans-translation. This chain is SsrA-binding protein, found in Xylella fastidiosa (strain M23).